The chain runs to 247 residues: LOB domain-containing protein 38 (247 aa).

The LOB domain maps to 1–107 (MSCNGCRVLR…VETVLRGGSL (107 aa)). The span at 157 to 170 (FSSSRSRSRSTASP) shows a compositional bias: low complexity. Residues 157–184 (FSSSRSRSRSTASPPKRKRLSSEQQPSS) are disordered.

The protein belongs to the LOB domain-containing protein family. Expressed in young shoots, roots, stems, leaves and flowers.

In Arabidopsis thaliana (Mouse-ear cress), this protein is LOB domain-containing protein 38 (LBD38).